The chain runs to 333 residues: Taste receptor type 2 member 38 (333 aa).

Over 1 to 17 (MLTLTRICTVSYEVRST) the chain is Extracellular. Residues 18-38 (FLFISVLEFAVGFLTNAFIFL) traverse the membrane as a helical segment. The Cytoplasmic segment spans residues 39-55 (VNFWDVVKRQPLSNSDC). Residues 56–76 (VLLCLSISRLFLHGLLFLSAI) traverse the membrane as a helical segment. At 77 to 94 (QLTHFQKLSEPLNHSYHA) the chain is on the extracellular side. The chain crosses the membrane as a helical span at residues 95-115 (IIMLWMIANQANLWLATCLSL). Topologically, residues 116–142 (LYCSKLIRSSHTFLICLASWVSRKICQ) are cytoplasmic. A helical membrane pass occupies residues 143–163 (MLLGIILCSCICTVLCVWCYF). At 164–190 (SRPHFTVTTVLFTNNNTRLNWQIKDLN) the chain is on the extracellular side. The N-linked (GlcNAc...) asparagine glycan is linked to N178. Residues 191-211 (LFYSFLFCYLWSVPPFLLFLV) form a helical membrane-spanning segment. Topologically, residues 212-251 (SSGMLTVSLGRHMRTMKVYTRDFRDPSLEAHIKALKSLVS) are cytoplasmic. A helical membrane pass occupies residues 252-272 (FFCFFVISSCAAFISVPLLIL). The Extracellular portion of the chain corresponds to 273 to 276 (WRDK). Residues 277–297 (IGVMVCVGIMAACPSGHAAIL) traverse the membrane as a helical segment. Residues 298-333 (ISGNAKLRRAVTTILLWAQSSLKVRADHKADSRTLC) lie on the Cytoplasmic side of the membrane.

This sequence belongs to the G-protein coupled receptor T2R family.

Its subcellular location is the membrane. Functionally, receptor that may play a role in the perception of bitterness and is gustducin-linked. May play a role in sensing the chemical composition of the gastrointestinal content. The activity of this receptor may stimulate alpha gustducin, mediate PLC-beta-2 activation and lead to the gating of TRPM5. This Hylobates klossii (Kloss's gibbon) protein is Taste receptor type 2 member 38 (TAS2R38).